Reading from the N-terminus, the 495-residue chain is Lysine--tRNA ligase (495 aa).

The Mg(2+) site is built by E406 and E413.

This sequence belongs to the class-II aminoacyl-tRNA synthetase family. Homodimer. Mg(2+) serves as cofactor.

It is found in the cytoplasm. The catalysed reaction is tRNA(Lys) + L-lysine + ATP = L-lysyl-tRNA(Lys) + AMP + diphosphate. The sequence is that of Lysine--tRNA ligase (lysS) from Staphylococcus aureus.